The chain runs to 670 residues: UvrABC system protein B (670 aa).

Residues 26 to 183 (NGLKSGLAFQ…QRLVDLQYNR (158 aa)) form the Helicase ATP-binding domain. 39–46 (GVTGSGKT) contacts ATP. The Beta-hairpin signature appears at 92 to 115 (YYDYYQPEAYVPSSDSFIEKDAAI). One can recognise a Helicase C-terminal domain in the interval 431–597 (QVDDLLSEIN…GLSKQVNDVM (167 aa)). Residues 630-665 (LKQIALSEKQMFACAKNLEFEKAALFRDEVTKLHEQ) form the UVR domain.

The protein belongs to the UvrB family. As to quaternary structure, forms a heterotetramer with UvrA during the search for lesions. Interacts with UvrC in an incision complex.

It localises to the cytoplasm. Its function is as follows. The UvrABC repair system catalyzes the recognition and processing of DNA lesions. A damage recognition complex composed of 2 UvrA and 2 UvrB subunits scans DNA for abnormalities. Upon binding of the UvrA(2)B(2) complex to a putative damaged site, the DNA wraps around one UvrB monomer. DNA wrap is dependent on ATP binding by UvrB and probably causes local melting of the DNA helix, facilitating insertion of UvrB beta-hairpin between the DNA strands. Then UvrB probes one DNA strand for the presence of a lesion. If a lesion is found the UvrA subunits dissociate and the UvrB-DNA preincision complex is formed. This complex is subsequently bound by UvrC and the second UvrB is released. If no lesion is found, the DNA wraps around the other UvrB subunit that will check the other stand for damage. The sequence is that of UvrABC system protein B from Psychromonas ingrahamii (strain DSM 17664 / CCUG 51855 / 37).